A 162-amino-acid polypeptide reads, in one-letter code: Globin CTT-VI (162 aa).

The first 15 residues, M1–A15, serve as a signal peptide directing secretion. The Globin domain maps to V17–D161. The heme b site is built by H75 and H110.

It belongs to the globin family. In terms of assembly, homodimer.

The polypeptide is Globin CTT-VI (CTT-6) (Chironomus thummi thummi (Midge)).